The primary structure comprises 155 residues: Ribosome maturation factor RimP (155 aa).

It belongs to the RimP family.

Its subcellular location is the cytoplasm. Required for maturation of 30S ribosomal subunits. In Deinococcus geothermalis (strain DSM 11300 / CIP 105573 / AG-3a), this protein is Ribosome maturation factor RimP.